A 396-amino-acid chain; its full sequence is Purine ribonucleoside efflux pump NepI (396 aa).

Residues 1 to 21 are Cytoplasmic-facing; that stretch reads MSEFIAENRGANAITRPNWSA. A helical membrane pass occupies residues 22 to 42; sequence VFSVAFCVACLIIVEFLPVSL. At 43 to 54 the chain is on the periplasmic side; the sequence is LTPMAQDLGISE. The chain crosses the membrane as a helical span at residues 55 to 75; the sequence is GVAGQSVTVTAFVAMFASLFI. Residues 76-85 are Cytoplasmic-facing; that stretch reads TQTIQATDRR. Residues 86 to 106 form a helical membrane-spanning segment; it reads YVVILFAVLLTLSCLLVSFAN. A topological domain (periplasmic) is located at residue S107. The helical transmembrane segment at 108–128 threads the bilayer; sequence FSLLLIGRACLGLALGGFWAM. Residues 129 to 147 are Cytoplasmic-facing; that stretch reads SASLTMRLVPPRTVPKALS. The helical transmembrane segment at 148–168 threads the bilayer; sequence VIFGAVSIALVIAAPLGSFLG. Topologically, residues 169–175 are periplasmic; that stretch reads ELIGWRN. The chain crosses the membrane as a helical span at residues 176-196; that stretch reads VFNAAAAMGVLCIFWIIKSLP. Topologically, residues 197-215 are cytoplasmic; sequence SLPGEPSHQKQNTFRLLQR. Residues 216-236 form a helical membrane-spanning segment; it reads PGVMAGMIAIFMSFAGQFAFF. Over 237–255 the chain is Periplasmic; sequence TYIRPVYMNLAGFGVDGLT. A helical transmembrane segment spans residues 256-276; the sequence is LVLLSFGIASFVGTSLSSFIL. At 277 to 281 the chain is on the cytoplasmic side; it reads KRSVK. Residues 282 to 302 form a helical membrane-spanning segment; sequence LALAGAPFVLALSALVLTLWG. Over 303–305 the chain is Periplasmic; the sequence is SYK. Residues 306–326 traverse the membrane as a helical segment; the sequence is IVATGVAIIWGLTFALIPVGW. Topologically, residues 327 to 343 are cytoplasmic; it reads STWITRSLADQAEKAGS. A helical transmembrane segment spans residues 344-364; it reads IQVAVIQLANTCGAAIGGYAL. The Periplasmic segment spans residues 365 to 366; that stretch reads DN. A helical transmembrane segment spans residues 367 to 387; sequence IGLTSPLMLSGTLMLLTALLV. The Cytoplasmic portion of the chain corresponds to 388-396; the sequence is TAKVKMKKS.

Belongs to the major facilitator superfamily. DHA1 family. NepI (TC 2.A.1.2.26) subfamily.

Its subcellular location is the cell inner membrane. It catalyses the reaction inosine(in) + H(+)(out) = inosine(out) + H(+)(in). It carries out the reaction guanosine(in) + H(+)(out) = guanosine(out) + H(+)(in). Functionally, involved in the efflux of purine ribonucleosides, such as inosine and guanosine. The chain is Purine ribonucleoside efflux pump NepI from Escherichia coli O6:H1 (strain CFT073 / ATCC 700928 / UPEC).